The sequence spans 236 residues: 7-cyano-7-deazaguanine synthase (236 aa).

7–17 (CSGGLDSVSLA) is an ATP binding site. Zn(2+) is bound by residues Cys-185, Cys-193, Cys-196, and Cys-199.

It belongs to the QueC family. Zn(2+) is required as a cofactor.

The enzyme catalyses 7-carboxy-7-deazaguanine + NH4(+) + ATP = 7-cyano-7-deazaguanine + ADP + phosphate + H2O + H(+). The protein operates within purine metabolism; 7-cyano-7-deazaguanine biosynthesis. Catalyzes the ATP-dependent conversion of 7-carboxy-7-deazaguanine (CDG) to 7-cyano-7-deazaguanine (preQ(0)). In Rhizobium rhizogenes (strain K84 / ATCC BAA-868) (Agrobacterium radiobacter), this protein is 7-cyano-7-deazaguanine synthase.